The primary structure comprises 340 residues: Fructose-1,6-bisphosphatase class 1 (340 aa).

The Mg(2+) site is built by Glu-107, Asp-126, Leu-128, and Asp-129. Asn-215 lines the substrate pocket. Glu-287 contacts Mg(2+).

This sequence belongs to the FBPase class 1 family. As to quaternary structure, homotetramer. It depends on Mg(2+) as a cofactor.

The protein resides in the cytoplasm. It carries out the reaction beta-D-fructose 1,6-bisphosphate + H2O = beta-D-fructose 6-phosphate + phosphate. The protein operates within carbohydrate biosynthesis; gluconeogenesis. The polypeptide is Fructose-1,6-bisphosphatase class 1 (Brucella anthropi (strain ATCC 49188 / DSM 6882 / CCUG 24695 / JCM 21032 / LMG 3331 / NBRC 15819 / NCTC 12168 / Alc 37) (Ochrobactrum anthropi)).